The primary structure comprises 62 residues: Large ribosomal subunit protein bL28 (62 aa).

It belongs to the bacterial ribosomal protein bL28 family.

This chain is Large ribosomal subunit protein bL28, found in Moorella thermoacetica (strain ATCC 39073 / JCM 9320).